The primary structure comprises 163 residues: PTS system fructose-specific EIIB component (163 aa).

Residues 1-163 (MMNIVLARID…FVQILRNVTK (163 aa)) enclose the PTS EIIB type-4 domain. The active-site Pros-phosphohistidine intermediate is H15. H15 is modified (phosphohistidine; by EIIA).

Its subcellular location is the cytoplasm. It catalyses the reaction D-fructose(out) + N(pros)-phospho-L-histidyl-[protein] = D-fructose 1-phosphate(in) + L-histidyl-[protein]. Functionally, the phosphoenolpyruvate-dependent sugar phosphotransferase system (sugar PTS), a major carbohydrate active -transport system, catalyzes the phosphorylation of incoming sugar substrates concomitantly with their translocation across the cell membrane. The enzyme II LevDE PTS system is involved in fructose transport. Its function is as follows. LevD and LevE act as negative regulators of the levanase operon. They may be involved in a PTS-mediated phosphorylation of a regulator. This chain is PTS system fructose-specific EIIB component, found in Bacillus subtilis (strain 168).